Reading from the N-terminus, the 416-residue chain is Putative gustatory receptor 57a (416 aa).

The Cytoplasmic segment spans residues 1-13 (MAVLYFFREPETV). Residues 14–34 (FDCAAFICILQFLMGCNGFGI) traverse the membrane as a helical segment. The Extracellular portion of the chain corresponds to 35–48 (RRSTFRISWASRIY). A helical membrane pass occupies residues 49–69 (SMSVAIAAFCCLFGSLSVLLA). Over 70-83 (EEDIRERLAKADNL) the chain is Cytoplasmic. The helical transmembrane segment at 84-104 (VLSISALELLMSTLVFGVTVI) threads the bilayer. Topologically, residues 105 to 143 (SLQVFARRHLGIYQRLAALDARLMSDFGANLNYRKMLRK) are extracellular. A helical transmembrane segment spans residues 144–164 (NIAVLGIVTTIYLMAINSAAV). Over 165-171 (QVASGHR) the chain is Cytoplasmic. Residues 172-192 (ALFLLFALCYTIVTGGPHFTG) form a helical membrane-spanning segment. The Extracellular segment spans residues 193–295 (YVHMTLAEML…NEEENGSCYR (103 aa)). N290 is a glycosylation site (N-linked (GlcNAc...) asparagine). Residues 296 to 316 (MLGYLALVMIPPLYKLLIAPF) traverse the membrane as a helical segment. The Cytoplasmic portion of the chain corresponds to 317-374 (YCDRTIYEARRCLRLVEKLDDWFPQKSSLRPLVESLMSWRIQAKIQFTSGLDVVLSRK). Residues 375–395 (VIGLFTSILVNYLLILIQFAM) traverse the membrane as a helical segment. The Extracellular segment spans residues 396–416 (TQKMGEQIEQQKIALQEWIGF).

It belongs to the insect chemoreceptor superfamily. Gustatory receptor (GR) family. Gr57a subfamily. In terms of tissue distribution, in larvae, is expressed in neurons of the terminal external chemosensory organ as well as in the dorsal pharyngeal sense organ.

It is found in the cell membrane. Its function is as follows. Probable gustatory receptor which mediates acceptance or avoidance behavior, depending on its substrates. The protein is Putative gustatory receptor 57a (Gr57a) of Drosophila melanogaster (Fruit fly).